We begin with the raw amino-acid sequence, 626 residues long: PEX5-related protein (626 aa).

Disordered regions lie at residues 1 to 20 (MYQGHMQKSKEQGYGKLSSD), 118 to 167 (VSQT…SSLD), and 181 to 235 (KFHG…ASEL). The segment covering 181 to 198 (KFHGDRNTKGHPMAERKS) has biased composition (basic and acidic residues). Phosphoserine is present on Ser-205. The segment covering 225-235 (SALNSESASEL) has biased composition (low complexity). Ser-253, Ser-257, and Ser-261 each carry phosphoserine. 3 TPR repeats span residues 326–359 (WPGAFEEGLKRLKEGDLPVTILFMEAAILQDPGD), 360–393 (AEAWQFLGITQAENENEQAAIVALQRCLELQPNN), and 395–427 (KALMALAVSYTNTGHQQDACDALKNWIKQNPKY). A phosphoserine mark is found at Ser-445 and Ser-447. 3 TPR repeats span residues 474 to 507 (PDLQTGLGVLFHLSGEFNRAIDAFNAALTVRPED), 509 to 541 (SLWNRLGATLANGDRSEEAVEAYTRALEIQPGF), and 543 to 575 (RSRYNLGISCINLGAYREAVSNFLTALSLQRKS).

This sequence belongs to the peroxisomal targeting signal receptor family. As to quaternary structure, interacts with RAB8B. Forms an obligate 4:4 complex with HCN2. May interact with the C-terminal PTS1-type tripeptide peroxisomal targeting signal (SKL-type); the relevance of such interaction is however unclear. Interacts with HCN3. Interacts with HCN4 with a 4:4 HCN4:PEX5L stoichiometry; reduces the effects of cAMP on the voltage-dependence and rate of activation of HCN4. Mainly expressed in brain. Also expressed in pancreas, testis and pituitary.

The protein localises to the cytoplasm. Its subcellular location is the membrane. Accessory subunit of hyperpolarization-activated cyclic nucleotide-gated (HCN) channels, regulating their cell-surface expression and cyclic nucleotide dependence. The protein is PEX5-related protein (PEX5L) of Homo sapiens (Human).